The sequence spans 223 residues: Thiamine-phosphate synthase (223 aa).

4-amino-2-methyl-5-(diphosphooxymethyl)pyrimidine is bound by residues 42–46 (QLRDK) and asparagine 83. 2 residues coordinate Mg(2+): aspartate 84 and aspartate 103. Residue serine 122 participates in 4-amino-2-methyl-5-(diphosphooxymethyl)pyrimidine binding. 148 to 150 (TPT) is a 2-[(2R,5Z)-2-carboxy-4-methylthiazol-5(2H)-ylidene]ethyl phosphate binding site. Residue lysine 151 coordinates 4-amino-2-methyl-5-(diphosphooxymethyl)pyrimidine. Glycine 179 serves as a coordination point for 2-[(2R,5Z)-2-carboxy-4-methylthiazol-5(2H)-ylidene]ethyl phosphate.

Belongs to the thiamine-phosphate synthase family. Mg(2+) is required as a cofactor.

It carries out the reaction 2-[(2R,5Z)-2-carboxy-4-methylthiazol-5(2H)-ylidene]ethyl phosphate + 4-amino-2-methyl-5-(diphosphooxymethyl)pyrimidine + 2 H(+) = thiamine phosphate + CO2 + diphosphate. The enzyme catalyses 2-(2-carboxy-4-methylthiazol-5-yl)ethyl phosphate + 4-amino-2-methyl-5-(diphosphooxymethyl)pyrimidine + 2 H(+) = thiamine phosphate + CO2 + diphosphate. The catalysed reaction is 4-methyl-5-(2-phosphooxyethyl)-thiazole + 4-amino-2-methyl-5-(diphosphooxymethyl)pyrimidine + H(+) = thiamine phosphate + diphosphate. It participates in cofactor biosynthesis; thiamine diphosphate biosynthesis; thiamine phosphate from 4-amino-2-methyl-5-diphosphomethylpyrimidine and 4-methyl-5-(2-phosphoethyl)-thiazole: step 1/1. Its function is as follows. Condenses 4-methyl-5-(beta-hydroxyethyl)thiazole monophosphate (THZ-P) and 2-methyl-4-amino-5-hydroxymethyl pyrimidine pyrophosphate (HMP-PP) to form thiamine monophosphate (TMP). The protein is Thiamine-phosphate synthase of Mycolicibacterium paratuberculosis (strain ATCC BAA-968 / K-10) (Mycobacterium paratuberculosis).